A 960-amino-acid polypeptide reads, in one-letter code: Chromo domain-containing protein 1 (960 aa).

The region spanning 22–74 is the Chromo domain; it reads YEVEDILADRVNKNGINEYYIKWAGYDWYDNTWEPEQNLFGAEKVLKKWKKRK.

As to quaternary structure, ago1, chp1 and tas3 interact to form the core of the RNA-induced transcriptional silencing (RITS) complex. The RITS complex interacts with the RDRC complex via interaction between ago1 and hrr1. Clr4 has a role in mediating this interaction. Interacts with dri1.

It is found in the nucleus. The protein localises to the cytoplasm. It localises to the cytoskeleton. Its subcellular location is the microtubule organizing center. The protein resides in the spindle pole body. In terms of biological role, component of the kinetochore which plays a role in stabilizing microtubules and so allowing accurate chromosome segregation. Has a role in the RNA interference (RNAi) pathway which is important for heterochromatin formation and accurate chromosome segregation. A member of the RNA-induced transcriptional silencing (RITS) complex which is involved in the biosynthesis of dsRNA from primer siRNAs provided by the RNA-directed RNA polymerase (RDRC) complex. This Schizosaccharomyces pombe (strain 972 / ATCC 24843) (Fission yeast) protein is Chromo domain-containing protein 1.